A 227-amino-acid chain; its full sequence is Nodulation protein W (227 aa).

The Response regulatory domain maps to 21-135; that stretch reads IVFVVEDDIS…ELLDAVVAAT (115 aa). The residue at position 70 (D70) is a 4-aspartylphosphate. In terms of domain architecture, HTH luxR-type spans 151 to 216; the sequence is LKSLFETLSP…DLIRMSETLG (66 aa). The segment at residues 175 to 194 is a DNA-binding region (H-T-H motif); that stretch reads NKQVAAELGLAEITVKIYRG.

In terms of processing, phosphorylated by NodV.

It localises to the cytoplasm. In terms of biological role, member of the two-component regulatory system NodV/NodW probably involved in the regulation of the transcription of genes involved in the nodulation process. The protein is Nodulation protein W (nodW) of Bradyrhizobium diazoefficiens (strain JCM 10833 / BCRC 13528 / IAM 13628 / NBRC 14792 / USDA 110).